Reading from the N-terminus, the 349-residue chain is Terpene cyclase rstn5 (349 aa).

The next 5 membrane-spanning stretches (helical) occupy residues 4–24, 81–101, 116–136, 158–178, and 181–201; these read LTPL…WGVF, FMVQ…TEGA, GLFS…FWFV, VVPS…FDPF, and GLDL…CISL. Asparagine 222 carries N-linked (GlcNAc...) asparagine glycosylation. The next 3 helical transmembrane spans lie at 228 to 248, 271 to 291, and 309 to 329; these read VAVG…GLTG, LVLL…LLLA, and TLAV…AWAL.

Belongs to the membrane-bound ascI terpene cyclase family.

Its subcellular location is the membrane. It participates in antifungal biosynthesis. Cyclase; part of the gene cluster that mediates the biosynthesis of the tetrahydropyranyl antifungal agent restricticin that acts as an inhibitor of CYP51 and blocks the ergosterol biosynthesis. The highly reducing polyketide synthase rstn3, the short chain dehydrogenase rstn4, the cyclase rstn5, the FAD-dependent monooxygenase rstn6 and the enoylreductase rstn7 are required to generate the first stable intermediate desmethylrestrictinol. Rstn3 with rstn7 biosynthesize the first polyketide chain intermediate that is reduced by rstn4, followed by epoxidation by rstn6 before 6-endo cyclization via epoxide opening by rstn5 leads to desmethylrestrictinol. The methyltransferase rstn1 then catalyzes the C4 O-methylation of desmethylrestrictinol to produce restrictinol, and the nonribosomal peptide synthetase rstn8 catalyzes the C3 esterification of restrictinol with glycine that leads to restricticin. In Aspergillus nomiae NRRL (strain ATCC 15546 / NRRL 13137 / CBS 260.88 / M93), this protein is Terpene cyclase rstn5.